Here is a 500-residue protein sequence, read N- to C-terminus: Lysine--tRNA ligase (500 aa).

Mg(2+)-binding residues include glutamate 410 and glutamate 417.

The protein belongs to the class-II aminoacyl-tRNA synthetase family. Homodimer. The cofactor is Mg(2+).

Its subcellular location is the cytoplasm. It catalyses the reaction tRNA(Lys) + L-lysine + ATP = L-lysyl-tRNA(Lys) + AMP + diphosphate. This chain is Lysine--tRNA ligase, found in Shewanella piezotolerans (strain WP3 / JCM 13877).